The following is a 79-amino-acid chain: RNA-binding protein Hfq (79 aa).

In terms of domain architecture, Sm spans 10-70; the sequence is DAFLNHVRKT…ISTIMPAQPI (61 aa).

It belongs to the Hfq family. In terms of assembly, homohexamer.

In terms of biological role, RNA chaperone that binds small regulatory RNA (sRNAs) and mRNAs to facilitate mRNA translational regulation in response to envelope stress, environmental stress and changes in metabolite concentrations. Also binds with high specificity to tRNAs. In Ruegeria sp. (strain TM1040) (Silicibacter sp.), this protein is RNA-binding protein Hfq.